The sequence spans 358 residues: Chorismate synthase (358 aa).

Residue R47 participates in NADP(+) binding. FMN is bound by residues 124 to 126 (RSS), 240 to 241 (NA), G284, 299 to 303 (KPVAT), and R325.

It belongs to the chorismate synthase family. In terms of assembly, homotetramer. The cofactor is FMNH2.

The enzyme catalyses 5-O-(1-carboxyvinyl)-3-phosphoshikimate = chorismate + phosphate. Its pathway is metabolic intermediate biosynthesis; chorismate biosynthesis; chorismate from D-erythrose 4-phosphate and phosphoenolpyruvate: step 7/7. In terms of biological role, catalyzes the anti-1,4-elimination of the C-3 phosphate and the C-6 proR hydrogen from 5-enolpyruvylshikimate-3-phosphate (EPSP) to yield chorismate, which is the branch point compound that serves as the starting substrate for the three terminal pathways of aromatic amino acid biosynthesis. This reaction introduces a second double bond into the aromatic ring system. This chain is Chorismate synthase, found in Phocaeicola vulgatus (strain ATCC 8482 / DSM 1447 / JCM 5826 / CCUG 4940 / NBRC 14291 / NCTC 11154) (Bacteroides vulgatus).